A 491-amino-acid chain; its full sequence is MKSHIMDSKSTKKRDLSKYFLPDIRQARKRIKKADIIKDGFEIPANIINYGEGKTYHIKTFGCQSNLRDTEVMMGMLELIGYEYNEDVNTSDLVLLNTCAVREHAESKVFADIGILDRIKKSNPNFIFGVCGCMAQEEAVVNRILKSNFNVDFIFGTHNVHRILNLLEQVIFEKNLVVEVWSHEGNVIENLPSKRTNNLKGFVNVMYGCDKFCTYCIVPMTRGKIRSRRKEDILDEVHQMISEGYKEVTLIGQNVNSYGIDFDNGENYLFNNLLEDVAKTGIERVRFTTSNPWNFTRSIVDTMKKYPNIMPHIHLPIQSGDETILKKMNRPMKIGDYIDLVDYIRANIPNCSITTDLIVGFPNETKEQFNKTLELYKRIEFDNAFTFIYSKRDGTVAAIIPDEIPLSEKKERLQELNEMVKTFSKKNNEKYVNKVLDVLVDGPSKKDKTVISGYSPQWKVVNFTGSAKSGEIVKVLITSASRFTLNGKMID.

The MTTase N-terminal domain occupies 54-172 (KTYHIKTFGC…ILNLLEQVIF (119 aa)). The [4Fe-4S] cluster site is built by Cys-63, Cys-99, Cys-133, Cys-209, Cys-213, and Cys-216. Residues 195-426 (RTNNLKGFVN…NEMVKTFSKK (232 aa)) form the Radical SAM core domain. Positions 429–491 (EKYVNKVLDV…RFTLNGKMID (63 aa)) constitute a TRAM domain.

Belongs to the methylthiotransferase family. MiaB subfamily. In terms of assembly, monomer. The cofactor is [4Fe-4S] cluster.

The protein resides in the cytoplasm. It catalyses the reaction N(6)-dimethylallyladenosine(37) in tRNA + (sulfur carrier)-SH + AH2 + 2 S-adenosyl-L-methionine = 2-methylsulfanyl-N(6)-dimethylallyladenosine(37) in tRNA + (sulfur carrier)-H + 5'-deoxyadenosine + L-methionine + A + S-adenosyl-L-homocysteine + 2 H(+). Functionally, catalyzes the methylthiolation of N6-(dimethylallyl)adenosine (i(6)A), leading to the formation of 2-methylthio-N6-(dimethylallyl)adenosine (ms(2)i(6)A) at position 37 in tRNAs that read codons beginning with uridine. The chain is tRNA-2-methylthio-N(6)-dimethylallyladenosine synthase from Malacoplasma penetrans (strain HF-2) (Mycoplasma penetrans).